The sequence spans 43 residues: uncharacterized protein (43 aa).

This is an uncharacterized protein from Homo sapiens (Human).